We begin with the raw amino-acid sequence, 387 residues long: Dynactin subunit 2 (387 aa).

3 coiled-coil regions span residues 99–125, 256–282, and 355–387; these read LQRCHRLKCEMNELMEEIEASRADTGR, SQLDTIEQRLNNLLQQMNSIQEKSNAT, and TGVQEAFAQNLENVNKEVKKLEERMTKLQQMIK.

The protein belongs to the dynactin subunit 2 family. As to quaternary structure, subunit of dynactin, a multiprotein complex associated with dynein.

It localises to the cytoplasm. The protein resides in the cytoskeleton. The protein localises to the membrane. Its function is as follows. Modulates cytoplasmic dynein binding to an organelle, and plays a role in prometaphase chromosome alignment and spindle organization during mitosis. This is Dynactin subunit 2 from Anopheles gambiae (African malaria mosquito).